The sequence spans 844 residues: Aminopeptidase N (844 aa).

Residues glutamate 120 and 253 to 257 (GAMEN) contribute to the substrate site. Histidine 289 is a Zn(2+) binding site. Glutamate 290 functions as the Proton acceptor in the catalytic mechanism. Positions 293 and 312 each coordinate Zn(2+).

Belongs to the peptidase M1 family. Monomer. The cofactor is Zn(2+).

It is found in the cytoplasm. The enzyme catalyses Release of an N-terminal amino acid, Xaa-|-Yaa- from a peptide, amide or arylamide. Xaa is preferably Ala, but may be most amino acids including Pro (slow action). When a terminal hydrophobic residue is followed by a prolyl residue, the two may be released as an intact Xaa-Pro dipeptide.. Aminopeptidase N is involved in the degradation of intracellular peptides generated by protein breakdown during normal growth as well as in response to nutrient starvation. The chain is Aminopeptidase N (pepN) from Lactobacillus helveticus (Lactobacillus suntoryeus).